The chain runs to 305 residues: Glycine--tRNA ligase alpha subunit (305 aa).

This sequence belongs to the class-II aminoacyl-tRNA synthetase family. In terms of assembly, tetramer of two alpha and two beta subunits.

Its subcellular location is the cytoplasm. The enzyme catalyses tRNA(Gly) + glycine + ATP = glycyl-tRNA(Gly) + AMP + diphosphate. In Vibrio vulnificus (strain CMCP6), this protein is Glycine--tRNA ligase alpha subunit.